Here is a 122-residue protein sequence, read N- to C-terminus: Phosphoribosyl-ATP pyrophosphatase (122 aa).

The protein belongs to the PRA-PH family.

The protein resides in the cytoplasm. It carries out the reaction 1-(5-phospho-beta-D-ribosyl)-ATP + H2O = 1-(5-phospho-beta-D-ribosyl)-5'-AMP + diphosphate + H(+). It functions in the pathway amino-acid biosynthesis; L-histidine biosynthesis; L-histidine from 5-phospho-alpha-D-ribose 1-diphosphate: step 2/9. The polypeptide is Phosphoribosyl-ATP pyrophosphatase (Burkholderia thailandensis (strain ATCC 700388 / DSM 13276 / CCUG 48851 / CIP 106301 / E264)).